A 206-amino-acid chain; its full sequence is Outer-membrane lipoprotein carrier protein (206 aa).

The signal sequence occupies residues 1–21 (MKKLLCAVLLSPLLYSNAVLA).

This sequence belongs to the LolA family. In terms of assembly, monomer.

It localises to the periplasm. Participates in the translocation of lipoproteins from the inner membrane to the outer membrane. Only forms a complex with a lipoprotein if the residue after the N-terminal Cys is not an aspartate (The Asp acts as a targeting signal to indicate that the lipoprotein should stay in the inner membrane). In Shewanella oneidensis (strain ATCC 700550 / JCM 31522 / CIP 106686 / LMG 19005 / NCIMB 14063 / MR-1), this protein is Outer-membrane lipoprotein carrier protein.